A 338-amino-acid polypeptide reads, in one-letter code: MTALSSENCSFQYQLRQTNQPLDVNYLLFLIILGKILLNILTLGMRRKNTCQNFMEYFCISLAFVDLLLLVNISIILYFRDFVLLSIRFTKYHICLFTQIISFTYGFLHYPVFLTACIDYCLNFSKTTKLSFKCQKLFYFFTVILIWISVLAYVLGDPAIYQSLKAQNAYSRHCPFYVSIQSYWLSFFMVMILFVAFITCWEEVTTLVQAIRITSYMNETILYFPFSSHSSYTVRSKKIFLSKLIVCFLSTWLPFVLLQVIIVLLKVQIPAYIEMNIPWLYFVNSFLIATVYWFNCHKLNLKDIGLPLDPFVNWKCCFIPLTIPNLEQIEKPISIMIC.

Over 1 to 23 the chain is Extracellular; the sequence is MTALSSENCSFQYQLRQTNQPLD. An N-linked (GlcNAc...) asparagine glycan is attached at N8. The helical transmembrane segment at 24–44 threads the bilayer; sequence VNYLLFLIILGKILLNILTLG. The Cytoplasmic portion of the chain corresponds to 45–58; it reads MRRKNTCQNFMEYF. A helical membrane pass occupies residues 59-79; it reads CISLAFVDLLLLVNISIILYF. Over 80–93 the chain is Extracellular; the sequence is RDFVLLSIRFTKYH. A helical membrane pass occupies residues 94 to 114; sequence ICLFTQIISFTYGFLHYPVFL. The Cytoplasmic segment spans residues 115 to 136; sequence TACIDYCLNFSKTTKLSFKCQK. The helical transmembrane segment at 137 to 157 threads the bilayer; the sequence is LFYFFTVILIWISVLAYVLGD. At 158 to 177 the chain is on the extracellular side; that stretch reads PAIYQSLKAQNAYSRHCPFY. A helical membrane pass occupies residues 178–198; sequence VSIQSYWLSFFMVMILFVAFI. The Cytoplasmic portion of the chain corresponds to 199–244; the sequence is TCWEEVTTLVQAIRITSYMNETILYFPFSSHSSYTVRSKKIFLSKL. A helical transmembrane segment spans residues 245 to 265; it reads IVCFLSTWLPFVLLQVIIVLL. Residues 266–268 lie on the Extracellular side of the membrane; the sequence is KVQ. A helical membrane pass occupies residues 269 to 289; that stretch reads IPAYIEMNIPWLYFVNSFLIA. The Cytoplasmic portion of the chain corresponds to 290–338; the sequence is TVYWFNCHKLNLKDIGLPLDPFVNWKCCFIPLTIPNLEQIEKPISIMIC.

This sequence belongs to the G-protein coupled receptor 1 family.

It localises to the cell membrane. Functionally, orphan receptor. This is Probable G-protein coupled receptor 160 (GPR160) from Homo sapiens (Human).